The primary structure comprises 508 residues: MQRLLAPARRVLQVKRAMQETSLTPAHLLSAAQQRFSTIPPAPLAKTDTWPKDVGILALEVYFPAQYVDQTDLEKFNNVEAGKYTVGLGQTRMGFCSVQEDINSLCLTVVQRLMERTKLPWDAVGRLEVGTETIIDKSKAVKTVLMELFQDSGNTDIEGIDTTNACYGGTASLFNAANWMESSYWDGRYALVVCGDIAVYPSGNARPTGGAGAVAMLIGPKAPLVLEQGLRGTHMENAYDFYKPNLASEYPLVDGKLSIQCYLRALDRCYAAYRKKIQNQWKQAGNNQPFTLDDVQYMIFHTPFCKMVQKSLARLMFNDFLSSSSDKQNNLYKGLEAFRGLKLEETYTNKDVDKALLKASLDMFNQKTKASLYLSTNNGNMYTSSLYGCLASLLSHHSAQELAGSRIGAFSYGSGLAASFFSFRVSKDASPGSPLEKLVSSVSDLPKRLDSRRRMSPEEFTEIMNQREQFYHKVNFSPPGDTSNLFPGTWYLERVDEMHRRKYARCPV.

Residues 1–37 (MQRLLAPARRVLQVKRAMQETSLTPAHLLSAAQQRFS) constitute a mitochondrion transit peptide. Residue Lys-52 is modified to N6-succinyllysine. Glu-80 and Ala-81 together coordinate (3S)-3-hydroxy-3-methylglutaryl-CoA. An N6-acetyllysine; alternate mark is found at Lys-83 and Lys-118. An N6-succinyllysine; alternate mark is found at Lys-83 and Lys-118. Glu-132 serves as the catalytic Proton donor/acceptor. Residues Cys-166, Asn-204, and Thr-208 each coordinate (3S)-3-hydroxy-3-methylglutaryl-CoA. Cys-166 serves as the catalytic Acyl-thioester intermediate. Lys-221 bears the N6-succinyllysine mark. Residue Lys-243 is modified to N6-acetyllysine. Lys-256 is modified (N6-acetyllysine; alternate). At Lys-256 the chain carries N6-succinyllysine; alternate. (3S)-3-hydroxy-3-methylglutaryl-CoA is bound by residues Ser-258 and His-301. The active-site Proton donor/acceptor is the His-301. Lys-306 is subject to N6-acetyllysine. Lys-310 lines the (3S)-3-hydroxy-3-methylglutaryl-CoA pocket. N6-acetyllysine; alternate is present on residues Lys-310 and Lys-327. Lys-310 and Lys-327 each carry N6-succinyllysine; alternate. Lys-333 is subject to N6-succinyllysine. 4 positions are modified to N6-acetyllysine; alternate: Lys-342, Lys-350, Lys-354, and Lys-358. N6-succinyllysine; alternate is present on residues Lys-342, Lys-350, Lys-354, and Lys-358. (3S)-3-hydroxy-3-methylglutaryl-CoA contacts are provided by Asn-380 and Ser-414. Lys-427 carries the N6-acetyllysine modification. At Ser-433 the chain carries Phosphoserine. Position 437 is an N6-acetyllysine (Lys-437). Residue Ser-440 is modified to Phosphoserine. Lys-447 is modified (N6-acetyllysine; alternate). Lys-447 carries the post-translational modification N6-succinyllysine; alternate. Residue Ser-456 is modified to Phosphoserine. An N6-acetyllysine; alternate modification is found at Lys-473. Lys-473 carries the N6-succinyllysine; alternate modification. Phosphoserine is present on Ser-477.

Belongs to the thiolase-like superfamily. HMG-CoA synthase family. In terms of assembly, homodimer. Acetylation of Lys-427 is observed in liver mitochondria from fasted mice but not from fed mice. In terms of processing, succinylated. Desuccinylated by SIRT5. Succinylation, at least at Lys-83 and Lys-310, inhibits the enzymatic activity. As to expression, liver and kidney.

The protein resides in the mitochondrion. It carries out the reaction acetoacetyl-CoA + acetyl-CoA + H2O = (3S)-3-hydroxy-3-methylglutaryl-CoA + CoA + H(+). It functions in the pathway metabolic intermediate biosynthesis; (R)-mevalonate biosynthesis; (R)-mevalonate from acetyl-CoA: step 2/3. Catalyzes the first irreversible step in ketogenesis, condensing acetyl-CoA to acetoacetyl-CoA to form HMG-CoA, which is converted by HMG-CoA reductase (HMGCR) into mevalonate. The protein is Hydroxymethylglutaryl-CoA synthase, mitochondrial (Hmgcs2) of Mus musculus (Mouse).